Here is a 430-residue protein sequence, read N- to C-terminus: MTIISDVYAREVLDSRGNPTIEVEVYLESGVLGRAIVPSGASTGAFEAVELRDGDKGRYLGKGVLKAVENVNDIIAPEITGLDALDQVAIDKIMLDLDGTPNKAKLGANAILGVSMAVAKAAAEALDIPLFQYLGGVNAKQLPVPMMNILNGGSHADNNVDIQEFMVMPVGAKTFKEALRMGTEIYHNLKDVLKSKGLATGVGDEGGFAPNLSSNEEALQIIMEAIEAAGYKPGVDIKLALDVAATEFYDEDEKLYKLTGEGVTKTAEEMVDFYEALVKKYPIVSIEDGLSEDDWEGWRVMTERLGDNIQIVGDDLFVTNTERLKKGIQTKTANSILVKLNQIGTITETLDAIEMAKRAGYTTVISHRSGETEDATIADIAVAVNAGQIKTGAPARTDRVAKYNQLLRIEDMLGFTGQYIGNEVFYNIKK.

Residue Gln-163 participates in (2R)-2-phosphoglycerate binding. Glu-205 acts as the Proton donor in catalysis. Residues Asp-242, Glu-287, and Asp-314 each coordinate Mg(2+). (2R)-2-phosphoglycerate is bound by residues Lys-339, Arg-368, Ser-369, and Lys-390. Lys-339 functions as the Proton acceptor in the catalytic mechanism.

Belongs to the enolase family. It depends on Mg(2+) as a cofactor.

Its subcellular location is the cytoplasm. The protein resides in the secreted. It is found in the cell surface. It catalyses the reaction (2R)-2-phosphoglycerate = phosphoenolpyruvate + H2O. It functions in the pathway carbohydrate degradation; glycolysis; pyruvate from D-glyceraldehyde 3-phosphate: step 4/5. Its function is as follows. Catalyzes the reversible conversion of 2-phosphoglycerate (2-PG) into phosphoenolpyruvate (PEP). It is essential for the degradation of carbohydrates via glycolysis. In Alkaliphilus metalliredigens (strain QYMF), this protein is Enolase.